The primary structure comprises 306 residues: tRNA dimethylallyltransferase (306 aa).

An ATP-binding site is contributed by Gly-15 to Ser-22. Thr-17–Ser-22 is a binding site for substrate. The interaction with substrate tRNA stretch occupies residues Asp-40–Gln-43.

It belongs to the IPP transferase family. As to quaternary structure, monomer. Mg(2+) serves as cofactor.

It catalyses the reaction adenosine(37) in tRNA + dimethylallyl diphosphate = N(6)-dimethylallyladenosine(37) in tRNA + diphosphate. Its function is as follows. Catalyzes the transfer of a dimethylallyl group onto the adenine at position 37 in tRNAs that read codons beginning with uridine, leading to the formation of N6-(dimethylallyl)adenosine (i(6)A). This is tRNA dimethylallyltransferase from Methylobacterium sp. (strain 4-46).